The chain runs to 582 residues: Potassium voltage-gated channel subfamily KQT member 1 (582 aa).

Over 1–31 (RVSIYSARRPLLARTHIQGRVYNFLERPTGW) the chain is Cytoplasmic. Residues 32 to 53 (KCFVYHFAVFLIVLVCLIFSVL) form a helical membrane-spanning segment. At 54–64 (STIEQYVALAT) the chain is on the extracellular side. A helical transmembrane segment spans residues 65–87 (GTLFWMEIVLVVFFGTEYVVRLW). Residues 88-103 (SAGCRSKYVGVWGRLR) lie on the Cytoplasmic side of the membrane. The chain crosses the membrane as a helical span at residues 104 to 129 (FARKPISIIDLIVVLASMVVLCVGSK). Residues 130–137 (GQVFATSA) are Extracellular-facing. A helical; Voltage-sensor membrane pass occupies residues 138–153 (IRGIRFLQILRMLHVD). The tract at residues 149–157 (MLHVDRQGG) is interaction with KCNE3. The Cytoplasmic portion of the chain corresponds to 154–171 (RQGGTWRLLGSVVFIHRQ). Gln-155 contacts a 1,2-diacyl-sn-glycero-3-phospho-(1D-myo-inositol-4,5-bisphosphate). A helical membrane pass occupies residues 172 to 194 (ELITTLYIGFLGLIFSSYFVYLA). At 195-210 (EKDAVNESGQVEFGSY) the chain is on the extracellular side. N-linked (GlcNAc...) asparagine glycosylation occurs at Asn-200. An intramembrane region (pore-forming) is located at residues 211-231 (ADALWWGVVTVTTIGYGDKVP). Topologically, residues 232–233 (QT) are extracellular. The chain crosses the membrane as a helical span at residues 234–259 (WVGKTIASCFSVFAISFFALPAGILG). The Cytoplasmic portion of the chain corresponds to 260 to 582 (SGFALKVQQK…VPRRGPEEGS (323 aa)). Residues 281 to 293 (AAASLIQTAWRCY) are interaction with CALM. Residues Ser-318 and Ser-320 each carry the phosphoserine modification. The interval 426 to 440 (KVIRRMQYFVAKKKF) is interaction with CALM; calcium-dependent. The segment at 446 to 483 (PYDVRDVIEQYSQGHLNLMVRIKELQRRLDQSIGKPSL) is interaction with KCNE1 C-terminus. Residues 496–532 (SNTIGARLNRVEDKVAQLDQRLVLITDMLQQLLSLHH) adopt a coiled-coil conformation. An interaction with AKAP9 region spans residues 499-527 (IGARLNRVEDKVAQLDQRLVLITDMLQQL). The interval 500–531 (GARLNRVEDKVAQLDQRLVLITDMLQQLLSLH) is C-terminal assembly domain (tetramerization). Residues 530–582 (LHHGGPPGSRPPSGGGAQVQPCGPTNPELFLPGNALPTYEQLTVPRRGPEEGS) form a disordered region.

Belongs to the potassium channel family. KQT (TC 1.A.1.15) subfamily. Kv7.1/KCNQ1 sub-subfamily. In terms of assembly, tetramer. Heterotetramer with KCNE1; targets to the membrane raft. Interacts (via C-terminus) with CALM; forms a heterooctameric structure (with 4:4 KCNQ1:CALM stoichiometry) in a calcium-independent manner. Interacts with AKAP9; targets protein kinase A (PKA) catalytic and regulatory subunits and protein phosphatase 1 (PP1) to the KCNQ1-KCNE1 complex, allowing PKA-mediated phosphorylation and increase of delayed rectifier potassium channel activity. Interacts with KCNE2; form a heterooligomer complex that targets to the membrane raft and leading to currents with an apparently instantaneous activation, a rapid deactivation process and a linear current-voltage relationship and decreases the amplitude of the outward current. Interacts with AP2M1; mediates estrogen-induced internalization via clathrin-coated vesicles. Interacts with NEDD4L; promotes internalization and decreases I(Ks) currents. Interacts with USP2; counteracts the NEDD4L-specific down-regulation of I(Ks) and restore plasma membrane localization. Heterotetramer with KCNQ5; has a voltage-gated potassium channel activity. Interacts with KCNE3; four KCNE3 molecules are bound to one KCNQ1 tetramer (4:4 KCNQ1:KCNE3 stoichiometry); alters membrane raft localization; affects KCNQ1 structure and gating properties. Interacts with KCNE4; impairs KCNQ1 localization in lipid rafts and inhibits voltage-gated potassium channel activity. Interacts with KCNE5; impairs KCNQ1 localization in lipid rafts and only conducts current upon strong and continued depolarization. In terms of processing, phosphorylated by PKA; increases delayed rectifier potassium channel activity of the KCNQ1-KCNE1 complex through a macromolecular complex that includes PKA, PP1, and the targeting protein AKAP9. Post-translationally, ubiquitinated by NEDD4L; promotes internalization. The ubiquitinylated form is internalized through a clathrin-mediated endocytosis by interacting with AP2M1 and is recycled back to the cell membrane via RAB4A and RAB11A. Deubiquitinated by USP2; counteracts the NEDD4L-specific down-regulation of I(Ks) and restores the membrane localization.

Its subcellular location is the cell membrane. It localises to the cytoplasmic vesicle membrane. It is found in the early endosome. The protein localises to the membrane raft. The protein resides in the endoplasmic reticulum. Its subcellular location is the basolateral cell membrane. It catalyses the reaction K(+)(in) = K(+)(out). PIP2 molecule is essential to activate KCNQ channels by inducing the coupling of the voltage-sensing domain (VSD) and the pore-forming domain (PD). Upon channel activation, PIP2 disrupts the VSD-calmodulin/CALM interactions, causing the release of CALM from the VSD which triggers the opening of the gate. Calcium potentiates KCNQ1 channel current through calcium-bound CALM. Calcium-bound CALM competes with PIP2 to stabilize the channel open state. In terms of biological role, pore-forming subunit of the voltage-gated potassium (Kv) channel involved in the regulation of cardiomyocyte excitability and important in normal development and functions of myocardium, inner ear, stomach and colon. Associates with KCNE beta subunits that modulates current kinetics. Induces a voltage-dependent by rapidly activating and slowly deactivating potassium-selective outward current. Also promotes a delayed voltage activated potassium current showing outward rectification characteristic. During beta-adrenergic receptor stimulation participates in cardiac repolarization by associating with KCNE1 to form the I(Ks) cardiac potassium current that increases the amplitude and slows down the activation kinetics of outward potassium current I(Ks). Muscarinic agonist oxotremorine-M strongly suppresses KCNQ1/KCNE1 current. When associated with KCNE3, forms the potassium channel that is important for cyclic AMP-stimulated intestinal secretion of chloride ions. This interaction with KCNE3 is reduced by 17beta-estradiol, resulting in the reduction of currents. During conditions of increased substrate load, maintains the driving force for proximal tubular and intestinal sodium ions absorption, gastric acid secretion, and cAMP-induced jejunal chloride ions secretion. Allows the provision of potassium ions to the luminal membrane of the secretory canaliculus in the resting state as well as during stimulated acid secretion. When associated with KCNE2, forms a heterooligomer complex leading to currents with an apparently instantaneous activation, a rapid deactivation process and a linear current-voltage relationship and decreases the amplitude of the outward current. When associated with KCNE4, inhibits voltage-gated potassium channel activity. When associated with KCNE5, this complex only conducts current upon strong and continued depolarization. Also forms a heterotetramer with KCNQ5 that has a voltage-gated potassium channel activity. Binds with phosphatidylinositol 4,5-bisphosphate. The sequence is that of Potassium voltage-gated channel subfamily KQT member 1 from Felis catus (Cat).